Consider the following 201-residue polypeptide: Ubiquitin-conjugating enzyme E2 E2 (201 aa).

Basic and acidic residues predominate over residues 1-10 (MSTEAQRVDD). A disordered region spans residues 1 to 55 (MSTEAQRVDDSPSTSGGSSDGDQRESVQQEPEREQVQPKKKEGKISSKTAAKLST). Ser2 bears the N-acetylserine mark. Ser11, Ser15, Ser18, and Ser19 each carry phosphoserine. The segment covering 21–45 (GDQRESVQQEPEREQVQPKKKEGKI) has biased composition (basic and acidic residues). A compositionally biased stretch (low complexity) spans 46 to 55 (SSKTAAKLST). A UBC core domain is found at 55–201 (TSAKRIQKEL…ARQWTKRYAT (147 aa)). Cys139 (glycyl thioester intermediate) is an active-site residue.

This sequence belongs to the ubiquitin-conjugating enzyme family. Autoubiquitinated in vitro.

The catalysed reaction is S-ubiquitinyl-[E1 ubiquitin-activating enzyme]-L-cysteine + [E2 ubiquitin-conjugating enzyme]-L-cysteine = [E1 ubiquitin-activating enzyme]-L-cysteine + S-ubiquitinyl-[E2 ubiquitin-conjugating enzyme]-L-cysteine.. The protein operates within protein modification; protein ubiquitination. Its function is as follows. Accepts ubiquitin from the E1 complex and catalyzes its covalent attachment to other proteins. In vitro catalyzes 'Lys-11'- and 'Lys-48'-, as well as 'Lys-63'-linked polyubiquitination. Catalyzes the ISGylation of influenza A virus NS1 protein. The polypeptide is Ubiquitin-conjugating enzyme E2 E2 (Homo sapiens (Human)).